Consider the following 1890-residue polypeptide: DNA polymerase zeta catalytic subunit (1890 aa).

Composition is skewed to polar residues over residues 508 to 533 (QENL…NLRT) and 549 to 560 (PDSSTSNGASEN). Disordered regions lie at residues 508 to 565 (QENL…FRRY) and 922 to 942 (GDSN…DRGA). Over residues 922 to 940 (GDSNIDSEKQPLRDNHNDR) the composition is skewed to basic and acidic residues. The Zn(2+) site is built by cysteine 1789, cysteine 1792, cysteine 1803, and cysteine 1806. A CysA-type zinc finger spans residues 1789–1806 (CILCGEVVQESAQLCNRC). The [4Fe-4S] cluster site is built by cysteine 1835, cysteine 1838, cysteine 1851, and cysteine 1856. Residues 1835 to 1856 (CRHCGGGDWVVQSGVKCNSLAC) carry the CysB motif motif.

It belongs to the DNA polymerase type-B family. Forms DNA polymerase zeta with REV7. The cofactor is [4Fe-4S] cluster. As to expression, expressed in roots, leaves and flowers.

The protein resides in the nucleus. The enzyme catalyses DNA(n) + a 2'-deoxyribonucleoside 5'-triphosphate = DNA(n+1) + diphosphate. Functionally, catalytic subunit of the error prone DNA polymerase zeta. Involved in damage-tolerance mechanisms through translesion DNA synthesis. The protein is DNA polymerase zeta catalytic subunit (REV3) of Arabidopsis thaliana (Mouse-ear cress).